The following is a 239-amino-acid chain: Purine nucleoside phosphorylase DeoD-type (239 aa).

Residue His5 coordinates a purine D-ribonucleoside. Residues Gly21, Arg25, Arg44, and 88-91 each bind phosphate; that span reads RVGS. Residues 180–182 and 204–205 each bind a purine D-ribonucleoside; these read EME and SD. The active-site Proton donor is the Asp205.

The protein belongs to the PNP/UDP phosphorylase family. As to quaternary structure, homohexamer; trimer of homodimers.

It catalyses the reaction a purine D-ribonucleoside + phosphate = a purine nucleobase + alpha-D-ribose 1-phosphate. The enzyme catalyses a purine 2'-deoxy-D-ribonucleoside + phosphate = a purine nucleobase + 2-deoxy-alpha-D-ribose 1-phosphate. In terms of biological role, catalyzes the reversible phosphorolytic breakdown of the N-glycosidic bond in the beta-(deoxy)ribonucleoside molecules, with the formation of the corresponding free purine bases and pentose-1-phosphate. This Citrobacter koseri (strain ATCC BAA-895 / CDC 4225-83 / SGSC4696) protein is Purine nucleoside phosphorylase DeoD-type.